Consider the following 492-residue polypeptide: Alpha-2-antiplasmin (492 aa).

A signal peptide spans 1 to 22; sequence MALLWGLLALILSCLSSLCSAQ. Residues 23–40 constitute a propeptide that is removed on maturation; the sequence is FSPVSTMEPLDLQLMDGQ. The disordered stretch occupies residues 56–76; the sequence is QEPGGQIAPKKAPEDCKLSPT. Residues Cys-71 and Cys-144 are joined by a disulfide bond. N-linked (GlcNAc...) asparagine glycans are attached at residues Asn-127, Asn-249, Asn-296, Asn-310, and Asn-317. Residues 433–492 form a disordered region; that stretch reads SVRNPNPGAQPERKEQQDSPDGKDSFQDHKGLPRGDKPFDPDLKLGPPSEEDYAQPSSPK. Residues 443 to 475 are compositionally biased toward basic and acidic residues; it reads PERKEQQDSPDGKDSFQDHKGLPRGDKPFDPDL. Residue Tyr-485 is modified to Sulfotyrosine.

This sequence belongs to the serpin family. As to quaternary structure, forms protease inhibiting heterodimer with TMPRSS7. Post-translationally, proteolytically cleaved at Pro-31 by both the prolyl endopeptidase FAP form and antiplasmin-cleaving enzyme FAP soluble form to generate mature alpha-2-antiplasmin. In terms of tissue distribution, expressed by the liver and secreted in plasma.

It localises to the secreted. Serine protease inhibitor. The major targets of this inhibitor are plasmin and trypsin, but it also inactivates matriptase-3/TMPRSS7 and chymotrypsin. The protein is Alpha-2-antiplasmin (SERPINF2) of Bos taurus (Bovine).